Here is a 485-residue protein sequence, read N- to C-terminus: MHTKTIKELSALLQTKKISATELAQLFLKRMGASDLNAFLHVDEALTLQQAAAADQRIASGNAGVLTGIPIAHKDIFVTRNWRSTAGSKMLENYVSPFDATVVENFNQAGMVTLGKLNCDEFAMGSSNENSYFGAVKNPWDKTAIPGGSSGGSAAAIAARLTPASTATDTGGSIRQPAALCGVTGIKPTYGRVSRFGMIAFASSLDQGGPIAKTAEDCGLLLNAMVSFDERDSTSVERDKEDFTRDLNAPLEGLKIGIPREYFGAGLSADVEQAVRAALGEYEKLGATLVDISLPKTELSIPTYYVIAPAEASSNLSRFDGVRYGFRAKDYTDLSDMYCKTRAEGFGEEVKRRILVGAYVLSHGYYDAYYLQAQKIRRLIAQDFQQAFTLCDVIMGPVAPSVAWDLGDKADDPVANYLADIFTLSTSLAGLPGMSIPCGFGQGEKNAKRPVGLQIIGNYFAEAKLLNVAHQYQQATDWHLRQPAE.

Residues lysine 74 and serine 149 each act as charge relay system in the active site. Residue serine 173 is the Acyl-ester intermediate of the active site.

Belongs to the amidase family. GatA subfamily. In terms of assembly, heterotrimer of A, B and C subunits.

It catalyses the reaction L-glutamyl-tRNA(Gln) + L-glutamine + ATP + H2O = L-glutaminyl-tRNA(Gln) + L-glutamate + ADP + phosphate + H(+). In terms of biological role, allows the formation of correctly charged Gln-tRNA(Gln) through the transamidation of misacylated Glu-tRNA(Gln) in organisms which lack glutaminyl-tRNA synthetase. The reaction takes place in the presence of glutamine and ATP through an activated gamma-phospho-Glu-tRNA(Gln). In Herminiimonas arsenicoxydans, this protein is Glutamyl-tRNA(Gln) amidotransferase subunit A.